Reading from the N-terminus, the 521-residue chain is Glutamyl-tRNA(Gln) amidotransferase subunit A (521 aa).

Active-site charge relay system residues include lysine 79 and serine 187. The Acyl-ester intermediate role is filled by serine 211.

This sequence belongs to the amidase family. GatA subfamily. In terms of assembly, heterotrimer of A, B and C subunits.

It carries out the reaction L-glutamyl-tRNA(Gln) + L-glutamine + ATP + H2O = L-glutaminyl-tRNA(Gln) + L-glutamate + ADP + phosphate + H(+). Its function is as follows. Allows the formation of correctly charged Gln-tRNA(Gln) through the transamidation of misacylated Glu-tRNA(Gln) in organisms which lack glutaminyl-tRNA synthetase. The reaction takes place in the presence of glutamine and ATP through an activated gamma-phospho-Glu-tRNA(Gln). This Mesorhizobium japonicum (strain LMG 29417 / CECT 9101 / MAFF 303099) (Mesorhizobium loti (strain MAFF 303099)) protein is Glutamyl-tRNA(Gln) amidotransferase subunit A.